We begin with the raw amino-acid sequence, 1846 residues long: Insulin-like receptor (1846 aa).

3 N-linked (GlcNAc...) asparagine glycosylation sites follow: Asn-113, Asn-180, and Asn-364. 5 disulfides stabilise this stretch: Cys-371–Cys-386, Cys-393–Cys-401, Cys-397–Cys-410, Cys-413–Cys-422, and Cys-426–Cys-438. N-linked (GlcNAc...) asparagine glycosylation is present at Asn-453. 2 disulfide bridges follow: Cys-469/Cys-483 and Cys-486/Cys-490. An N-linked (GlcNAc...) asparagine glycan is attached at Asn-518. A disulfide bond links Cys-615 and Cys-646. 3 N-linked (GlcNAc...) asparagine glycosylation sites follow: Asn-652, Asn-671, and Asn-696. 3 Fibronectin type-III domains span residues 775–869 (TPDP…TMMG), 969–1067 (KPSS…LKRT), and 1077–1179 (LNET…TPGF). Residues 944-980 (EKAENLGKAPKTLGGKKPLIHISKKKPSSSSTTSTPA) are disordered. Over residues 961-970 (PLIHISKKKP) the composition is skewed to basic residues. Topologically, residues 970 to 1183 (PSSSSTTSTP…VMTPGFFTVE (214 aa)) are extracellular. Over residues 971 to 980 (SSSSTTSTPA) the composition is skewed to low complexity. 5 N-linked (GlcNAc...) asparagine glycosylation sites follow: Asn-1017, Asn-1047, Asn-1078, Asn-1087, and Asn-1093. Residues 1184–1204 (IILGMLLVFLILMSIAGCIIY) form a helical membrane-spanning segment. Residues 1205–1846 (YYIQVRYGKK…IEDNEHHPLV (642 aa)) lie on the Cytoplasmic side of the membrane. The Protein kinase domain maps to 1246–1528 (VVLGQQCGEG…LLAAEASPEF (283 aa)). Residues 1252 to 1260 (CGEGSFGKV) and Lys-1282 each bind ATP. The active-site Proton acceptor is the Asp-1388. Disordered stretches follow at residues 1718-1742 (ISSM…TNWS) and 1769-1826 (QQQQ…IFNG). Residues 1726 to 1742 (STGASSSSYGVPQTNWS) are compositionally biased toward polar residues. Positions 1808–1821 (YRNNGSPSRNGNSR) are enriched in low complexity.

The protein belongs to the protein kinase superfamily. Tyr protein kinase family. Insulin receptor subfamily. As to quaternary structure, tetramer of 2 alpha and 2 beta chains linked by disulfide bonds. The alpha chains contribute to the formation of the ligand-binding domain, while the beta chains carry the kinase domain. Interacts (via cytoplasmic domain) with shc-1 (PID domain). Interacts (via kinase domain) with daf-18 (via C-terminus). Interacts with casy-1; promoting axonal localization. It depends on Mg(2+) as a cofactor.

It localises to the membrane. Its subcellular location is the cell projection. The protein localises to the axon. It carries out the reaction L-tyrosyl-[protein] + ATP = O-phospho-L-tyrosyl-[protein] + ADP + H(+). Its activity is regulated as follows. Autophosphorylation activates the kinase activity. Interaction with shc-1 may inhibit its activity. Its function is as follows. Insulin receptor-like tyrosine kinase which regulates metabolism, controls longevity and prevents developmental arrest at the dauer stage. Binding of INS family members may either stimulate, or antagonize, association of the receptor with downstream mediators such as pdk-1 and age-1. Required for germline progenitor proliferation during larval development. Plays a role in maintaining gonad integrity in a daf-16/FOXO-dependent manner. Required for the response to environmental stimuli such as light, food, pheromone, and temperature. Negatively regulates resistance to UV and oxidative stress. In a daf-16/FOXO-dependent manner, plays a role in regulating the response to white light. Role in immune function and pathogen resistance. Negatively regulates autophagy. Regulates daf-18/PTEN protein levels. Plays a role in controlling seam cell development during the larval stages. In terms of biological role, required for taste avoidance learning in the cell body of ASER gustatory neurons. Required for taste avoidance learning in axons of ASER gustatory neurons. In Caenorhabditis elegans, this protein is Insulin-like receptor.